The sequence spans 276 residues: Phosphatidylglycerol--prolipoprotein diacylglyceryl transferase (276 aa).

7 helical membrane-spanning segments follow: residues 17–37, 59–79, 95–115, 129–149, 176–196, 202–222, and 237–257; these read LAIRWYGLMYLAGFIMFLWFG, MLFFGVMGVILGGRLGYVLFY, WEGGMAFHGGFLGVLVAMWLF, FIAPMIPCGLAAGRIGNFING, SQLYQFAGEGVALFIILWLFA, MGAVSGVFLIGYGGFRFAAEF, and LSMGQWLSLPMILIGIAMVVW. Residue Arg142 coordinates a 1,2-diacyl-sn-glycero-3-phospho-(1'-sn-glycerol).

The protein belongs to the Lgt family.

It localises to the cell inner membrane. It carries out the reaction L-cysteinyl-[prolipoprotein] + a 1,2-diacyl-sn-glycero-3-phospho-(1'-sn-glycerol) = an S-1,2-diacyl-sn-glyceryl-L-cysteinyl-[prolipoprotein] + sn-glycerol 1-phosphate + H(+). The protein operates within protein modification; lipoprotein biosynthesis (diacylglyceryl transfer). Catalyzes the transfer of the diacylglyceryl group from phosphatidylglycerol to the sulfhydryl group of the N-terminal cysteine of a prolipoprotein, the first step in the formation of mature lipoproteins. This chain is Phosphatidylglycerol--prolipoprotein diacylglyceryl transferase, found in Cupriavidus pinatubonensis (strain JMP 134 / LMG 1197) (Cupriavidus necator (strain JMP 134)).